Here is a 572-residue protein sequence, read N- to C-terminus: Putative inorganic phosphate transporter C8E4.01c (572 aa).

Residues 1 to 47 (MAFGSKILNIGSKSDEYNDDAVPLDQVEEGAQERRYYLGLTKREFKL) lie on the Cytoplasmic side of the membrane. Phosphoserine is present on residues serine 12 and serine 14. Residues 48–68 (MMLAGVGFFLDSYDLFIINLV) form a helical membrane-spanning segment. Residues 69 to 99 (TPIFEYLYWGGIEKGPTGKGHYPSGIRGLVN) are Extracellular-facing. Residues 100 to 120 (ASANIGNIFGQLLFGFMGDFF) traverse the membrane as a helical segment. Residues 121–123 (GRK) are Cytoplasmic-facing. A helical membrane pass occupies residues 124 to 144 (FVYGKEMVIVIIATVLVIAMP). Topologically, residues 145-153 (KSIHSPLSK) are extracellular. Residues 154 to 174 (MMWVFCWRWLLGVGIGGDYPM) traverse the membrane as a helical segment. Residues 175–193 (SAAITSERSKIKRRGTLIS) lie on the Cytoplasmic side of the membrane. The helical transmembrane segment at 194–214 (LIFAFQGFGTLAGAIVTIILL) threads the bilayer. Over 215 to 229 (GCFEHPLNREGHYHK) the chain is Extracellular. The helical transmembrane segment at 230–250 (LEGVWRLQFGLALVPAIGVLI) threads the bilayer. Residues 251-346 (PRLIMKESKS…TYFRQWRHFK (96 aa)) lie on the Cytoplasmic side of the membrane. The segment at 265 to 297 (KALNSAEGKDPKAFFNTDDEDNMKKSSSHGDSE) is disordered. Residues 286–296 (NMKKSSSHGDS) are compositionally biased toward basic and acidic residues. A phosphoserine mark is found at serine 292 and serine 296. Residues 347–367 (HLLGTSVCWFLLDIAFYGVNL) form a helical membrane-spanning segment. Topologically, residues 368 to 395 (NQSVILKNIGFSTGTNEYRTLMKNAIGN) are extracellular. A helical membrane pass occupies residues 396-416 (LIIAVAGYVPGYWFNVFLVEI). Residues 417–420 (LGRK) lie on the Cytoplasmic side of the membrane. Residues 421 to 441 (WIQLQGFVITGLMFAILAGRW) traverse the membrane as a helical segment. Residues 442-449 (NEISTGGR) are Extracellular-facing. Residues 450–470 (FACFVIAQLFSNFGPNSTTFI) traverse the membrane as a helical segment. Residues 471–485 (YPAEVFPARVRGTAH) are Cytoplasmic-facing. The chain crosses the membrane as a helical span at residues 486–506 (GVSAALGKCGAILASLLFNFL). Topologically, residues 507–508 (TG) are extracellular. The helical transmembrane segment at 509–529 (VIGYGNVMWIFCGCMWGGILF) threads the bilayer. Residues 530–572 (TLLLPETKGRDADEIDRLELFYGKDGKVQCDSKWKSWYFNGIF) are Cytoplasmic-facing.

Belongs to the major facilitator superfamily. Sugar transporter (TC 2.A.1.1) family.

The protein localises to the membrane. Functionally, high-affinity transporter for external inorganic phosphate. The chain is Putative inorganic phosphate transporter C8E4.01c from Schizosaccharomyces pombe (strain 972 / ATCC 24843) (Fission yeast).